The following is a 588-amino-acid chain: Disabled homolog 1 (588 aa).

A disordered region spans residues methionine 1–arginine 26. Residues alanine 15–arginine 26 are compositionally biased toward basic and acidic residues. Positions lysine 36–leucine 189 constitute a PID domain. A phosphotyrosine mark is found at tyrosine 198, tyrosine 220, and tyrosine 232. 4 disordered regions span residues threonine 224–proline 243, leucine 420–glycine 444, phenylalanine 451–threonine 470, and leucine 502–serine 588. Polar residues predominate over residues proline 424 to serine 436. 2 stretches are compositionally biased toward low complexity: residues threonine 503–threonine 512 and serine 523–serine 534. Serine 524 carries the post-translational modification Phosphoserine; by CDK5. Residues threonine 537–phenylalanine 546 are compositionally biased toward acidic residues.

As to quaternary structure, associates with the SH2 domains of SRC, FYN and ABL. Interacts (phosphorylated on tyrosine residues) with CRK and CRKL (via respective SH2 domain). Interacts with SIAH1, LRP8 and VLDLR. Interacts with LRP1. Interacts with APLP1 (via NPXY motif). Interacts with DAB2IP. Interacts with ZSWIM8. Post-translationally, phosphorylated by FYN on Tyr-198 and Tyr-220 upon reelin induction in embryonic neurons. Also found phosphorylated on Tyr-232 upon reelin induction. Also phosphorylated on Ser-524 independently of reelin signaling. Ubiquitinated by various cullin-5-RING E3 ubiquitin-protein ligase complexes (ECS complexes) following ligand-binding and phosphorylation, leading to its degradation. Ubiquitinated by the ECS(SOCS7) complex in the cortical plate of the developing cerebral cortex following ligand-binding and phosphorylation by FYN, leading to its degradation by the proteasome. Recognized by ZSWIM8 through a disorder targets misorder mechanism that eliminates misfolded DAB1 via ubiquitination and proteasomal degradation. As to expression, expressed mainly in brain. Specifically expressin in cortical neurons.

Its subcellular location is the cytoplasm. Its function is as follows. Signaling adapter of the reelin-mediated signaling pathway, which regulates the migration and differentiation of postmitotic neurons during brain development. Mediates intracellular transduction of Reelin signaling following reelin (RELN)-binding to its receptor: acts by docking proteins through its phosphotyrosine residues and PID domain. This chain is Disabled homolog 1, found in Mus musculus (Mouse).